Consider the following 340-residue polypeptide: UDP-3-O-acylglucosamine N-acyltransferase (340 aa).

The active-site Proton acceptor is histidine 238.

Belongs to the transferase hexapeptide repeat family. LpxD subfamily. Homotrimer.

The enzyme catalyses a UDP-3-O-[(3R)-3-hydroxyacyl]-alpha-D-glucosamine + a (3R)-hydroxyacyl-[ACP] = a UDP-2-N,3-O-bis[(3R)-3-hydroxyacyl]-alpha-D-glucosamine + holo-[ACP] + H(+). It functions in the pathway bacterial outer membrane biogenesis; LPS lipid A biosynthesis. In terms of biological role, catalyzes the N-acylation of UDP-3-O-acylglucosamine using 3-hydroxyacyl-ACP as the acyl donor. Is involved in the biosynthesis of lipid A, a phosphorylated glycolipid that anchors the lipopolysaccharide to the outer membrane of the cell. This Shewanella denitrificans (strain OS217 / ATCC BAA-1090 / DSM 15013) protein is UDP-3-O-acylglucosamine N-acyltransferase.